The following is a 394-amino-acid chain: ATP phosphoribosyltransferase regulatory subunit (394 aa).

The protein belongs to the class-II aminoacyl-tRNA synthetase family. HisZ subfamily. Heteromultimer composed of HisG and HisZ subunits.

It localises to the cytoplasm. The protein operates within amino-acid biosynthesis; L-histidine biosynthesis; L-histidine from 5-phospho-alpha-D-ribose 1-diphosphate: step 1/9. Required for the first step of histidine biosynthesis. May allow the feedback regulation of ATP phosphoribosyltransferase activity by histidine. The protein is ATP phosphoribosyltransferase regulatory subunit of Pseudomonas paraeruginosa (strain DSM 24068 / PA7) (Pseudomonas aeruginosa (strain PA7)).